A 606-amino-acid polypeptide reads, in one-letter code: Gamma-aminobutyric acid receptor subunit beta (606 aa).

A signal peptide spans 1–44 (MSDSKMDKLARMAPLPRTPLLTIWLAINMALIAQETGHKRIHTV). The Extracellular segment spans residues 45–268 (QAATGGGSML…CEIQFVRSMG (224 aa)). Residue Asn58 is glycosylated (N-linked (GlcNAc...) asparagine). A disulfide bridge connects residues Cys185 and Cys199. Asn253 carries N-linked (GlcNAc...) asparagine glycosylation. 3 helical membrane passes run 269–291 (YYLIQIYIPSGLIVVISWVSFWL), 297–316 (PARVALGVTTVLTMTTLMSS), and 333–356 (YLGTCFVMVFASLLEYATVGYMAK). Residues 357–568 (RIQMRKQRFM…LGITPSDIDK (212 aa)) are Cytoplasmic-facing. Disordered regions lie at residues 376–451 (KQQL…VSNR) and 482–542 (HDPK…AAVP). The span at 381–395 (GANQQQANPNPNANV) shows a compositional bias: low complexity. Residues 396–425 (GGPGGVGVGPGGPGGPGGGVNVGVGMGMGP) are compositionally biased toward gly residues. Positions 430–443 (GHGHHAHSHGHPHA) are enriched in basic residues. A compositionally biased stretch (gly residues) spans 499-536 (GGRGGPQSHGPGPGQGGGPPGGGGGGGGGGGPPEGGGD). The chain crosses the membrane as a helical span at residues 569–590 (YSRIVFPVCFVCFNLMYWIIYL).

It belongs to the ligand-gated ion channel (TC 1.A.9) family. Gamma-aminobutyric acid receptor (TC 1.A.9.5) subfamily.

The protein resides in the postsynaptic cell membrane. Its subcellular location is the cell membrane. Its function is as follows. GABA, an inhibitory neurotransmitter, mediates neuronal inhibition by binding to the GABA receptor and opening an integral chloride channel. The sequence is that of Gamma-aminobutyric acid receptor subunit beta (Rdl) from Drosophila simulans (Fruit fly).